We begin with the raw amino-acid sequence, 196 residues long: MAYTWRALLLLALAFLGSSMAERDCRVSSFKVKENFDKNRYSGTWYAMAKKDPEGLFLQDNVVAQFTVDENGQMSATAKGRVRLFNNWDVCADMIGSFTDTEDPAKFKMKYWGVASFLQKGNDDHWVVDTDYDTYALHYSCRELNEDGTCADSYSFVFSRDPKGLPPEAQKIVRQRQIDLCLDRKYRVIVHNGFCS.

Positions methionine 1–alanine 21 are cleaved as a signal peptide. Cystine bridges form between cysteine 25–cysteine 181, cysteine 91–cysteine 195, and cysteine 141–cysteine 150. Residue glutamine 119 coordinates substrate.

The protein belongs to the calycin superfamily. Lipocalin family. In terms of assembly, interacts with TTR. Interaction with TTR prevents its loss by filtration through the kidney glomeruli. Interacts with STRA6.

The protein localises to the secreted. Its function is as follows. Retinol-binding protein that mediates retinol transport in blood plasma. Delivers retinol from the liver stores to the peripheral tissues. Transfers the bound all-trans retinol to STRA6, that then facilitates retinol transport across the cell membrane. The sequence is that of Retinol-binding protein 4 (RBP4) from Gallus gallus (Chicken).